Reading from the N-terminus, the 474-residue chain is E3 ubiquitin-protein ligase RNF14 (474 aa).

The 127-residue stretch at 11 to 137 (DELLALASIY…QFLKEETLAY (127 aa)) folds into the RWD domain. The short motif at 37 to 45 (RIYLDLPQN) is the D-box element. Residues 216-457 (KLFLCSICFC…DPGSPCFNRL (242 aa)) are TRIAD supradomain. Positions 220, 223, 238, 240, 243, 246, 265, 270, 309, 314, 329, 332, 337, 340, and 345 each coordinate Zn(2+). The RING-type 1 zinc-finger motif lies at 220 to 270 (CSICFCEKLGSECMYFLECRHVYCKACLKDYFEIQIRDGQVQCLNCPEPKC). The segment at 289-350 (ARYDRLLLQS…RLTYHGVSPC (62 aa)) adopts an IBR-type zinc-finger fold. Ser348 is subject to Phosphoserine. Cys350 is a Zn(2+) binding site. A coiled-coil region spans residues 351 to 395 (KVTAEKLMDLRNEYLQADEANKRLLDQRYGKRVIQKALEEMESKE). Positions 361 to 474 (RNEYLQADEA…DDIWEDEVED (114 aa)) are interaction with androgen receptor. The Zn(2+) site is built by Cys404 and Cys407. The RING-type 2; atypical zinc finger occupies 404-433 (CPCCGTPIEKLDGCNKMTCTGCMQYFCWIC). The active site involves Cys417. Zn(2+)-binding residues include Cys422, Cys425, Cys430, Cys433, His445, and Cys453.

The protein belongs to the RBR family. RNF14 subfamily. As to quaternary structure, interacts with GCN1; interaction takes place in response to ribosome collisions and is required for ubiquitination of EEF1A1/eEF1A. Interacts with the ubiquitin-conjugating enzymes UBE2E1 and UBE2E2. Interacts with AR/androgen receptor. Interacts with TCF7/TCF1, TCF7L1/TCF3 and TCF7L2/TCF4; promoting Wnt signaling. In terms of processing, RING-type zinc finger-dependent and UBE2E2-dependent autoubiquitination. As to expression, widely expressed.

The protein localises to the cytoplasm. The protein resides in the nucleus. It catalyses the reaction [E2 ubiquitin-conjugating enzyme]-S-ubiquitinyl-L-cysteine + [acceptor protein]-L-lysine = [E2 ubiquitin-conjugating enzyme]-L-cysteine + [acceptor protein]-N(6)-ubiquitinyl-L-lysine.. It functions in the pathway protein modification; protein ubiquitination. In terms of biological role, E3 ubiquitin-protein ligase that plays a key role in the RNF14-RNF25 translation quality control pathway, a pathway that takes place when a ribosome has stalled during translation, and which promotes ubiquitination and degradation of translation factors on stalled ribosomes. Recruited to stalled ribosomes by the ribosome collision sensor GCN1 and mediates 'Lys-6'-linked ubiquitination of target proteins, leading to their degradation. Mediates ubiquitination of EEF1A1/eEF1A and ETF1/eRF1 translation factors on stalled ribosomes, leading to their degradation. Also catalyzes ubiquitination of ribosomal proteins RPL0, RPL1, RPL12, RPS13 and RPS17. Specifically required to resolve RNA-protein cross-links caused by reactive aldehydes, which trigger translation stress by stalling ribosomes: acts by catalying 'Lys-6'-linked ubiquitination of RNA-protein cross-links, leading to their removal by the ATP-dependent unfoldase VCP and subsequent degradation by the proteasome. Independently of its function in the response to stalled ribosomes, acts as a regulator of transcription in Wnt signaling via its interaction with TCF transcription factors (TCF7/TCF1, TCF7L1/TCF3 and TCF7L2/TCF4). May also play a role as a coactivator for androgen- and, to a lesser extent, progesterone-dependent transcription. This chain is E3 ubiquitin-protein ligase RNF14, found in Homo sapiens (Human).